A 316-amino-acid chain; its full sequence is MTAAPLKVAFAGTPEFAAAALEAILAAGFEVPLVLTQPDRPAGRGMKLSPSPVKQLALAHGIAVDQPSSLRGEEQRATLAACAPDVLVVAAYGLILPRAVLDLPRFGCLNIHASLLPRWRGAAPIHRAIEAGDTETGITIMQMDEGLDTGPMLMKHAVPIGPADTTGALHDRLAALGAQMIVEALRRLPSGELVAMPQPAEGATYAGKIGKAEAVIDWQCDASSVARAVRAFNPFPGAVASLRQVPLKIWFAEPVAGHGEPGTVLVADADGIVVACGTQAVRLAQLQKPGSRRLAAGEFLRGFPVSAGERFEAAAR.

Residue 114–117 (SLLP) participates in (6S)-5,6,7,8-tetrahydrofolate binding.

Belongs to the Fmt family.

The catalysed reaction is L-methionyl-tRNA(fMet) + (6R)-10-formyltetrahydrofolate = N-formyl-L-methionyl-tRNA(fMet) + (6S)-5,6,7,8-tetrahydrofolate + H(+). In terms of biological role, attaches a formyl group to the free amino group of methionyl-tRNA(fMet). The formyl group appears to play a dual role in the initiator identity of N-formylmethionyl-tRNA by promoting its recognition by IF2 and preventing the misappropriation of this tRNA by the elongation apparatus. This is Methionyl-tRNA formyltransferase from Aromatoleum aromaticum (strain DSM 19018 / LMG 30748 / EbN1) (Azoarcus sp. (strain EbN1)).